A 132-amino-acid polypeptide reads, in one-letter code: MAAGMKGKRSRRRKERKNVEHGCAHIKSTFNNSIVTITDSVGNTLSWASAGGLGFRGSRKSTPFAAQMAAETAAKAAMEHGLKSIEVYVKGPGSGREAAIRSLQAAGLEVTLIKDVTPIPHNGCRPPKRRRV.

Basic residues predominate over residues 1-16 (MAAGMKGKRSRRRKER). Positions 1-20 (MAAGMKGKRSRRRKERKNVE) are disordered.

Belongs to the universal ribosomal protein uS11 family. As to quaternary structure, part of the 30S ribosomal subunit. Interacts with proteins S7 and S18. Binds to IF-3.

In terms of biological role, located on the platform of the 30S subunit, it bridges several disparate RNA helices of the 16S rRNA. Forms part of the Shine-Dalgarno cleft in the 70S ribosome. This Clostridium botulinum (strain Hall / ATCC 3502 / NCTC 13319 / Type A) protein is Small ribosomal subunit protein uS11.